We begin with the raw amino-acid sequence, 486 residues long: UDP-N-acetylmuramoyl-L-alanyl-D-glutamate--2,6-diaminopimelate ligase (486 aa).

Residue S26 participates in UDP-N-acetyl-alpha-D-muramoyl-L-alanyl-D-glutamate binding. 104–110 provides a ligand contact to ATP; that stretch reads GTNGKTS. UDP-N-acetyl-alpha-D-muramoyl-L-alanyl-D-glutamate contacts are provided by residues 152–153, S179, Q185, and R187; that span reads TT. An N6-carboxylysine modification is found at K219. Residues R383, 407–410, G455, and E459 contribute to the meso-2,6-diaminopimelate site; that span reads DNPR. Positions 407–410 match the Meso-diaminopimelate recognition motif motif; it reads DNPR.

It belongs to the MurCDEF family. MurE subfamily. Mg(2+) serves as cofactor. In terms of processing, carboxylation is probably crucial for Mg(2+) binding and, consequently, for the gamma-phosphate positioning of ATP.

The protein resides in the cytoplasm. It carries out the reaction UDP-N-acetyl-alpha-D-muramoyl-L-alanyl-D-glutamate + meso-2,6-diaminopimelate + ATP = UDP-N-acetyl-alpha-D-muramoyl-L-alanyl-gamma-D-glutamyl-meso-2,6-diaminopimelate + ADP + phosphate + H(+). Its pathway is cell wall biogenesis; peptidoglycan biosynthesis. Its function is as follows. Catalyzes the addition of meso-diaminopimelic acid to the nucleotide precursor UDP-N-acetylmuramoyl-L-alanyl-D-glutamate (UMAG) in the biosynthesis of bacterial cell-wall peptidoglycan. This chain is UDP-N-acetylmuramoyl-L-alanyl-D-glutamate--2,6-diaminopimelate ligase, found in Caulobacter vibrioides (strain ATCC 19089 / CIP 103742 / CB 15) (Caulobacter crescentus).